Consider the following 364-residue polypeptide: Fructose-bisphosphate aldolase B (364 aa).

N-acetylalanine is present on alanine 2. Lysine 13 is subject to N6-succinyllysine. At serine 36 the chain carries Phosphoserine. Position 39 is a phosphothreonine (threonine 39). Arginine 43 contributes to the beta-D-fructose 1,6-bisphosphate binding site. Serine 89 carries the phosphoserine modification. Threonine 119 carries the phosphothreonine modification. The residue at position 121 (lysine 121) is an N6-succinyllysine. The residue at position 132 (serine 132) is a Phosphoserine. Glutamate 188 serves as the catalytic Proton acceptor. Residue lysine 230 is the Schiff-base intermediate with dihydroxyacetone-P of the active site. Serine 272, serine 276, serine 299, and serine 301 each carry phosphoserine. Position 272 to 274 (272 to 274 (SGG)) interacts with beta-D-fructose 1,6-bisphosphate. Residue arginine 304 participates in beta-D-fructose 1,6-bisphosphate binding. Residue serine 309 is modified to Phosphoserine. The residue at position 317 (lysine 317) is an N6-succinyllysine.

This sequence belongs to the class I fructose-bisphosphate aldolase family. In terms of assembly, homotetramer. Interacts with BBS1, BBS2, BBS4 and BBS7. Forms a ternary complex with G6PD and TP53; this interaction is direct.

It localises to the cytoplasm. The protein localises to the cytosol. The protein resides in the cytoskeleton. It is found in the microtubule organizing center. Its subcellular location is the centrosome. It localises to the centriolar satellite. It carries out the reaction beta-D-fructose 1,6-bisphosphate = D-glyceraldehyde 3-phosphate + dihydroxyacetone phosphate. The catalysed reaction is beta-D-fructose 1-phosphate = D-glyceraldehyde + dihydroxyacetone phosphate. The protein operates within carbohydrate degradation; glycolysis; D-glyceraldehyde 3-phosphate and glycerone phosphate from D-glucose: step 4/4. It functions in the pathway carbohydrate biosynthesis; gluconeogenesis. It participates in carbohydrate metabolism; fructose metabolism. Catalyzes the aldol cleavage of fructose 1,6-biphosphate to form two triosephosphates dihydroxyacetone phosphate and D-glyceraldehyde 3-phosphate in glycolysis as well as the reverse stereospecific aldol addition reaction in gluconeogenesis. In fructolysis, metabolizes fructose 1-phosphate derived from the phosphorylation of dietary fructose by fructokinase into dihydroxyacetone phosphate and D-glyceraldehyde. Acts as an adapter independently of its enzymatic activity, exerts a tumor suppressor role by stabilizing the ternary complex with G6PD and TP53 to inhibit G6PD activity and keep oxidative pentose phosphate metabolism in check. This Pongo abelii (Sumatran orangutan) protein is Fructose-bisphosphate aldolase B (ALDOB).